Reading from the N-terminus, the 98-residue chain is NADH-ubiquinone oxidoreductase chain 4L (98 aa).

3 helical membrane passes run M1–I21, L26–L46, and I61–V81.

This sequence belongs to the complex I subunit 4L family. As to quaternary structure, core subunit of respiratory chain NADH dehydrogenase (Complex I) which is composed of 45 different subunits.

The protein resides in the mitochondrion inner membrane. The catalysed reaction is a ubiquinone + NADH + 5 H(+)(in) = a ubiquinol + NAD(+) + 4 H(+)(out). Its function is as follows. Core subunit of the mitochondrial membrane respiratory chain NADH dehydrogenase (Complex I) which catalyzes electron transfer from NADH through the respiratory chain, using ubiquinone as an electron acceptor. Part of the enzyme membrane arm which is embedded in the lipid bilayer and involved in proton translocation. The sequence is that of NADH-ubiquinone oxidoreductase chain 4L (MT-ND4L) from Galago senegalensis (Northern lesser bushbaby).